The chain runs to 438 residues: Exoglucanase 3 (438 aa).

Positions 1-20 (MFKFAALLALASLVPGFVQA) are cleaved as a signal peptide. The CBM1 domain maps to 21–59 (QSPVWGQCGGNGWTGPTTCASGSTCVKQNDFYSQCLPNN). Intrachain disulfides connect Cys-28/Cys-45 and Cys-39/Cys-55. The segment at 57–90 (PNNQAPPSTTTQPGTTPPATTTSGGTGPTSGAGN) is disordered. Residues 60 to 87 (QAPPSTTTQPGTTPPATTTSGGTGPTSG) form a linker region. Residues 61–79 (APPSTTTQPGTTPPATTTS) show a composition bias toward low complexity. Residues 88-438 (AGNPYTGKTV…TLVANANPAL (351 aa)) are catalytic. Cystine bridges form between Cys-170–Cys-229 and Cys-360–Cys-407. The Proton donor role is filled by Asp-215. Asp-393 serves as the catalytic Nucleophile.

It belongs to the glycosyl hydrolase 6 (cellulase B) family.

It carries out the reaction Hydrolysis of (1-&gt;4)-beta-D-glucosidic linkages in cellulose and cellotetraose, releasing cellobiose from the non-reducing ends of the chains.. Shows enzymatic activity towards crystalline cellulose. At long reaction times. It is also able to degrade carboxymethyl cellulose and barley B-glucan. The sequence is that of Exoglucanase 3 (cel3) from Agaricus bisporus (White button mushroom).